The sequence spans 218 residues: Octanoyltransferase (218 aa).

Residues 31–206 (EETPDEVWLV…ELVNLLGYEQ (176 aa)) form the BPL/LPL catalytic domain. Residues 70–77 (RGGQVTYH), 137–139 (SLG), and 150–152 (GLA) contribute to the substrate site. Cys-168 functions as the Acyl-thioester intermediate in the catalytic mechanism.

Belongs to the LipB family.

The protein localises to the cytoplasm. The enzyme catalyses octanoyl-[ACP] + L-lysyl-[protein] = N(6)-octanoyl-L-lysyl-[protein] + holo-[ACP] + H(+). It participates in protein modification; protein lipoylation via endogenous pathway; protein N(6)-(lipoyl)lysine from octanoyl-[acyl-carrier-protein]: step 1/2. Its function is as follows. Catalyzes the transfer of endogenously produced octanoic acid from octanoyl-acyl-carrier-protein onto the lipoyl domains of lipoate-dependent enzymes. Lipoyl-ACP can also act as a substrate although octanoyl-ACP is likely to be the physiological substrate. This is Octanoyltransferase from Vibrio vulnificus (strain CMCP6).